Reading from the N-terminus, the 313-residue chain is uncharacterized protein (313 aa).

Positions 2–57 (KLERLLAMVVLLISKKQVQAAELAELFEVSVRTIYRDIETINRAGIPIVTSQGSGG) constitute an HTH deoR-type domain. The H-T-H motif DNA-binding region spans 19 to 38 (VQAAELAELFEVSVRTIYRD). In terms of domain architecture, WYL spans 131-210 (HTEDQKTLRE…KDLAILHQTF (80 aa)).

The protein localises to the cytoplasm. This is an uncharacterized protein from Bacillus subtilis (strain 168).